Here is an 85-residue protein sequence, read N- to C-terminus: MASHSAAGRRPTALVHIALFVAIAAVIINSSVCLGAAVHDAATSGTGALDPNVPAVPTPGGAGQPYTGRGCRTVYGCKPPAGSQP.

The Cytoplasmic portion of the chain corresponds to 1 to 12 (MASHSAAGRRPT). Residues 13 to 34 (ALVHIALFVAIAAVIINSSVCL) traverse the membrane as a helical segment. Topologically, residues 35-85 (GAAVHDAATSGTGALDPNVPAVPTPGGAGQPYTGRGCRTVYGCKPPAGSQP) are extracellular.

The protein resides in the membrane. Functionally, associated with pathogen defense. The polypeptide is Protein WIR1B (WIR1B) (Triticum aestivum (Wheat)).